Here is a 218-residue protein sequence, read N- to C-terminus: Putative transposase InsD for insertion element IS2E (218 aa).

The region spanning 23–206 is the Integrase catalytic domain; the sequence is KPAVPPSKRA…SPREYLRQRA (184 aa).

Involved in the transposition of the insertion sequence IS2. This is Putative transposase InsD for insertion element IS2E (insD8) from Escherichia coli (strain K12).